Here is a 93-residue protein sequence, read N- to C-terminus: Small ribosomal subunit protein uS19 (93 aa).

Belongs to the universal ribosomal protein uS19 family.

Protein S19 forms a complex with S13 that binds strongly to the 16S ribosomal RNA. The sequence is that of Small ribosomal subunit protein uS19 from Synechococcus sp. (strain JA-3-3Ab) (Cyanobacteria bacterium Yellowstone A-Prime).